The sequence spans 293 residues: Exosome complex component RRP4 (293 aa).

The S1 motif domain maps to 79 to 159 (EVGDIVVGRI…SDGAVSLHTR (81 aa)). Ser-124 is subject to Phosphoserine.

The protein belongs to the RRP4 family. Component of the RNA exosome core complex (Exo-9), composed of EXOSC1, EXOSC2, EXOSC3, EXOSC4, EXOSC5, EXOSC6, EXOSC7, EXOSC8 and EXOSC9; within the complex interacts with EXOSC4 and EXOSC7. The catalytically inactive RNA exosome core complex (Exo-9) associates with the catalytic subunit EXOSC10/RRP6. Exo-9 may associate with DIS3 to form the nucleolar exosome complex, or DIS3L to form the cytoplasmic exosome complex. Exo-9 is formed by a hexameric base ring consisting of the heterodimers EXOSC4-EXOSC9, EXOSC5-EXOSC8 and EXOSC6-EXOSC7, and a cap ring consisting of EXOSC1, EXOSC2 and EXOSC3. The RNA exosome complex associates with cofactors C1D/RRP47, MPHOSPH6/MPP6 and MTREX/MTR4. Interacts with GTPBP1. Interacts with ZFP36L1 (via N-terminus).

It is found in the cytoplasm. The protein localises to the nucleus. The protein resides in the nucleolus. Non-catalytic component of the RNA exosome complex which has 3'-&gt;5' exoribonuclease activity and participates in a multitude of cellular RNA processing and degradation events. In the nucleus, the RNA exosome complex is involved in proper maturation of stable RNA species such as rRNA, snRNA and snoRNA, in the elimination of RNA processing by-products and non-coding 'pervasive' transcripts, such as antisense RNA species and promoter-upstream transcripts (PROMPTs), and of mRNAs with processing defects, thereby limiting or excluding their export to the cytoplasm. The RNA exosome may be involved in Ig class switch recombination (CSR) and/or Ig variable region somatic hypermutation (SHM) by targeting AICDA deamination activity to transcribed dsDNA substrates. In the cytoplasm, the RNA exosome complex is involved in general mRNA turnover and specifically degrades inherently unstable mRNAs containing AU-rich elements (AREs) within their 3' untranslated regions, and in RNA surveillance pathways, preventing translation of aberrant mRNAs. It seems to be involved in degradation of histone mRNA. The catalytic inactive RNA exosome core complex of 9 subunits (Exo-9) is proposed to play a pivotal role in the binding and presentation of RNA for ribonucleolysis, and to serve as a scaffold for the association with catalytic subunits and accessory proteins or complexes. EXOSC2 as peripheral part of the Exo-9 complex stabilizes the hexameric ring of RNase PH-domain subunits through contacts with EXOSC4 and EXOSC7. The chain is Exosome complex component RRP4 (EXOSC2) from Bos taurus (Bovine).